The following is a 158-amino-acid chain: SsrA-binding protein (158 aa).

The interval 135–158 (DKRKTLKDRDWERDKQRGFKKDLD) is disordered. Residues 141–158 (KDRDWERDKQRGFKKDLD) show a composition bias toward basic and acidic residues.

Belongs to the SmpB family.

It is found in the cytoplasm. Its function is as follows. Required for rescue of stalled ribosomes mediated by trans-translation. Binds to transfer-messenger RNA (tmRNA), required for stable association of tmRNA with ribosomes. tmRNA and SmpB together mimic tRNA shape, replacing the anticodon stem-loop with SmpB. tmRNA is encoded by the ssrA gene; the 2 termini fold to resemble tRNA(Ala) and it encodes a 'tag peptide', a short internal open reading frame. During trans-translation Ala-aminoacylated tmRNA acts like a tRNA, entering the A-site of stalled ribosomes, displacing the stalled mRNA. The ribosome then switches to translate the ORF on the tmRNA; the nascent peptide is terminated with the 'tag peptide' encoded by the tmRNA and targeted for degradation. The ribosome is freed to recommence translation, which seems to be the essential function of trans-translation. The sequence is that of SsrA-binding protein from Psychrobacter arcticus (strain DSM 17307 / VKM B-2377 / 273-4).